The following is a 501-amino-acid chain: Raftlin-2 (501 aa).

Disordered regions lie at residues 1-20 and 196-239; these read MGCG…GKIF and SWNE…RKGE. Gly-2 is lipidated: N-myristoyl glycine. Cys-3 carries S-palmitoyl cysteine lipidation. Polar residues predominate over residues 220–233; sequence GQYQMEQNGSPTSS. Ser-405 carries the post-translational modification Phosphoserine. The segment at 407–449 is disordered; the sequence is AQTPDKKASRHIKGEDKNKATSRSIGLDTTSSQPAESRHLPEE. Thr-409 bears the Phosphothreonine mark. Residues 410-425 show a composition bias toward basic and acidic residues; sequence PDKKASRHIKGEDKNK. Positions 427 to 441 are enriched in polar residues; that stretch reads TSRSIGLDTTSSQPA. A Phosphoserine modification is found at Ser-430.

It belongs to the raftlin family.

Its subcellular location is the cell membrane. In terms of biological role, upon bacterial lipopolysaccharide stimulation, mediates clathrin-dependent internalization of TLR4 in dendritic cells, resulting in activation of TICAM1-mediated signaling and subsequent IFNB1 production. May regulate B-cell antigen receptor-mediated signaling. The protein is Raftlin-2 (RFTN2) of Homo sapiens (Human).